The chain runs to 298 residues: Mitochondrial intermembrane space import and assembly protein 40 (298 aa).

A mitochondrion-targeting transit peptide spans 1–33 (MYRTALRPSQSALRAIRSTTSPSALVSSGARRF). The Mitochondrial matrix segment spans residues 34 to 52 (ASTTSAPKKKSTWKGAAVR). The helical; Signal-anchor for type II membrane protein transmembrane segment at 53-69 (WGLAVAAVYYYNTSPIF) threads the bilayer. The Mitochondrial intermembrane portion of the chain corresponds to 70–298 (SDELPETAGT…TAANNNKKQQ (229 aa)). Residues 101–159 (RQAAEHAAARKAAQAAAKAAATPATPSESVEEQITKAEAEAEAVPEGDSKPRSESTEGV) form a disordered region. Positions 110–121 (RKAAQAAAKAAA) are enriched in low complexity. 3 disulfide bridges follow: Cys-191-Cys-193, Cys-202-Cys-235, and Cys-212-Cys-225. The region spanning 199 to 243 (HGPCGEEFKAAFSCFVYSTEEPKGMDCIEKFSHMQDCFRKYPEVY) is the CHCH domain. 2 consecutive short sequence motifs (cx9C motif) follow at residues 202-212 (CGEEFKAAFSC) and 225-235 (CIEKFSHMQDC). Residues 248-298 (ADDEEAERASAAAPAAEGTPAKEEPVENKKEEALEPATHDATAANNNKKQQ) form a disordered region. Positions 256–266 (ASAAAPAAEGT) are enriched in low complexity. The segment covering 267-280 (PAKEEPVENKKEEA) has biased composition (basic and acidic residues).

Monomer. Requires Cu(2+) as cofactor. It depends on Zn(2+) as a cofactor.

It is found in the mitochondrion inner membrane. In terms of biological role, required for the import and folding of small cysteine-containing proteins (small Tim) in the mitochondrial intermembrane space (IMS). Forms a redox cycle with ERV1 that involves a disulfide relay system. Precursor proteins to be imported into the IMS are translocated in their reduced form into the mitochondria. The oxidized form of MIA40 forms a transient intermolecular disulfide bridge with the reduced precursor protein, resulting in oxidation of the precursor protein that now contains an intramolecular disulfide bond and is able to undergo folding in the IMS. The sequence is that of Mitochondrial intermembrane space import and assembly protein 40 (mia-40) from Neurospora crassa (strain ATCC 24698 / 74-OR23-1A / CBS 708.71 / DSM 1257 / FGSC 987).